The primary structure comprises 346 residues: Fe(3+) ions import ATP-binding protein FbpC 3 (346 aa).

The ABC transporter domain occupies 5–235 (LEVDGVDKSF…PIDVATAEFI (231 aa)). 37–44 (GPSGCGKT) serves as a coordination point for ATP.

Belongs to the ABC transporter superfamily. Fe(3+) ion importer (TC 3.A.1.10) family. The complex is composed of two ATP-binding proteins (FbpC), two transmembrane proteins (FbpB) and a solute-binding protein (FbpA).

The protein localises to the cell membrane. It catalyses the reaction Fe(3+)(out) + ATP + H2O = Fe(3+)(in) + ADP + phosphate + H(+). Functionally, part of the ABC transporter complex FbpABC involved in Fe(3+) ions import. Responsible for energy coupling to the transport system. This is Fe(3+) ions import ATP-binding protein FbpC 3 from Rhodococcus jostii (strain RHA1).